The following is a 207-amino-acid chain: MPKVALLKQDGSNVGDIELNDSVFGIEPNTHVLHEAVVMQRASLRQGTHAVKNRSEVRGGGRKPWRQKGTGRARQGSTRSPQWVGGGTVFGPTPRSYSYKLPKKVRRLALRSALSSKVNEESLLVLENISIDAPKTKEIVNILKGLQVDAKALIVLSEKDETVIRSANNLQNVTVLTVEELNILDLLMHDKLIITKDAAEKAGEVLA.

The segment at 45 to 80 is disordered; it reads RQGTHAVKNRSEVRGGGRKPWRQKGTGRARQGSTRS. Over residues 60-71 the composition is skewed to basic residues; that stretch reads GGRKPWRQKGTG.

It belongs to the universal ribosomal protein uL4 family. As to quaternary structure, part of the 50S ribosomal subunit.

In terms of biological role, one of the primary rRNA binding proteins, this protein initially binds near the 5'-end of the 23S rRNA. It is important during the early stages of 50S assembly. It makes multiple contacts with different domains of the 23S rRNA in the assembled 50S subunit and ribosome. Functionally, forms part of the polypeptide exit tunnel. The protein is Large ribosomal subunit protein uL4 of Oceanobacillus iheyensis (strain DSM 14371 / CIP 107618 / JCM 11309 / KCTC 3954 / HTE831).